A 273-amino-acid polypeptide reads, in one-letter code: Ethanolamine ammonia-lyase small subunit (273 aa).

The adenosylcob(III)alamin site is built by valine 164, glutamate 185, and cysteine 214.

This sequence belongs to the EutC family. The basic unit is a heterodimer which dimerizes to form tetramers. The heterotetramers trimerize; 6 large subunits form a core ring with 6 small subunits projecting outwards. The cofactor is adenosylcob(III)alamin.

It is found in the bacterial microcompartment. It catalyses the reaction ethanolamine = acetaldehyde + NH4(+). It functions in the pathway amine and polyamine degradation; ethanolamine degradation. Functionally, catalyzes the deamination of various vicinal amino-alcohols to oxo compounds. Allows this organism to utilize ethanolamine as the sole source of nitrogen and carbon in the presence of external vitamin B12. This Pseudomonas aeruginosa (strain UCBPP-PA14) protein is Ethanolamine ammonia-lyase small subunit.